A 153-amino-acid polypeptide reads, in one-letter code: Large ribosomal subunit protein bL27m (153 aa).

Residues 1-37 constitute a mitochondrion transit peptide; it reads MINQGLFIRVNNFQLLKASLAYKKASNILTFPPIRTS. Positions 34–57 are disordered; the sequence is IRTSTKHGGGSSKNTGDSAGRRLG.

It belongs to the bacterial ribosomal protein bL27 family. Component of the mitochondrial large ribosomal subunit (mt-LSU). Mature yeast 74S mitochondrial ribosomes consist of a small (37S) and a large (54S) subunit. The 37S small subunit contains a 15S ribosomal RNA (15S mt-rRNA) and at least 32 different proteins. The 54S large subunit contains a 21S rRNA (21S mt-rRNA) and at least 45 different proteins.

Its subcellular location is the mitochondrion. Functionally, component of the mitochondrial ribosome (mitoribosome), a dedicated translation machinery responsible for the synthesis of mitochondrial genome-encoded proteins, including at least some of the essential transmembrane subunits of the mitochondrial respiratory chain. The mitoribosomes are attached to the mitochondrial inner membrane and translation products are cotranslationally integrated into the membrane. In Schizosaccharomyces pombe (strain 972 / ATCC 24843) (Fission yeast), this protein is Large ribosomal subunit protein bL27m (mrp7).